Consider the following 61-residue polypeptide: MAKKSMIAKAARKPKFAVRGYTRCQICGRPHSVYKDFGICRVCLRKMANEGLIPGLKKASW.

C24, C27, C40, and C43 together coordinate Zn(2+).

Belongs to the universal ribosomal protein uS14 family. Zinc-binding uS14 subfamily. In terms of assembly, part of the 30S ribosomal subunit. Contacts proteins S3 and S10. Zn(2+) serves as cofactor.

Its function is as follows. Binds 16S rRNA, required for the assembly of 30S particles and may also be responsible for determining the conformation of the 16S rRNA at the A site. The polypeptide is Small ribosomal subunit protein uS14 (Campylobacter concisus (strain 13826)).